A 469-amino-acid polypeptide reads, in one-letter code: 3-isopropylmalate dehydratase large subunit (469 aa).

The [4Fe-4S] cluster site is built by cysteine 349, cysteine 410, and cysteine 413.

The protein belongs to the aconitase/IPM isomerase family. LeuC type 1 subfamily. Heterodimer of LeuC and LeuD. Requires [4Fe-4S] cluster as cofactor.

The enzyme catalyses (2R,3S)-3-isopropylmalate = (2S)-2-isopropylmalate. Its pathway is amino-acid biosynthesis; L-leucine biosynthesis; L-leucine from 3-methyl-2-oxobutanoate: step 2/4. Its function is as follows. Catalyzes the isomerization between 2-isopropylmalate and 3-isopropylmalate, via the formation of 2-isopropylmaleate. In Neisseria gonorrhoeae (strain NCCP11945), this protein is 3-isopropylmalate dehydratase large subunit.